The sequence spans 420 residues: Tyrosine--tRNA ligase (420 aa).

Y33 provides a ligand contact to L-tyrosine. Residues 38–47 (PTGPSLHAGH) carry the 'HIGH' region motif. The L-tyrosine site is built by Y167 and Q171. The short motif at 227–231 (KFGKS) is the 'KMSKS' region element. K230 is an ATP binding site. An S4 RNA-binding domain is found at 352 to 418 (RTIIDLLVAS…GKKNFAGVQI (67 aa)).

This sequence belongs to the class-I aminoacyl-tRNA synthetase family. TyrS type 1 subfamily. Homodimer.

The protein localises to the cytoplasm. It carries out the reaction tRNA(Tyr) + L-tyrosine + ATP = L-tyrosyl-tRNA(Tyr) + AMP + diphosphate + H(+). In terms of biological role, catalyzes the attachment of tyrosine to tRNA(Tyr) in a two-step reaction: tyrosine is first activated by ATP to form Tyr-AMP and then transferred to the acceptor end of tRNA(Tyr). The polypeptide is Tyrosine--tRNA ligase (Corynebacterium glutamicum (strain ATCC 13032 / DSM 20300 / JCM 1318 / BCRC 11384 / CCUG 27702 / LMG 3730 / NBRC 12168 / NCIMB 10025 / NRRL B-2784 / 534)).